The following is a 79-amino-acid chain: Omega-phylotoxin-To1a (79 aa).

Residues 1–21 (MKKTFCFILILVCIVLKSVNA) form the signal peptide. The propeptide occupies 22-38 (EEEDNFEESSLEMETAR). 4 cysteine pairs are disulfide-bonded: cysteine 39–cysteine 59, cysteine 46–cysteine 63, cysteine 58–cysteine 78, and cysteine 65–cysteine 76.

As to expression, expressed by the venom duct.

The protein localises to the secreted. Insect-specific toxin that probably acts as an inhibitor of presynaptic insect calcium channels, presumably Cav2 subtype. In vivo, induces immediate paralysis on insects, followed by death when high doses are injected. The polypeptide is Omega-phylotoxin-To1a (Tibellus oblongus (Oblong running crab spider)).